Here is a 37-residue protein sequence, read N- to C-terminus: Large ribosomal subunit protein bL36c (37 aa).

This sequence belongs to the bacterial ribosomal protein bL36 family.

The protein resides in the plastid. The protein localises to the chloroplast. In Staurastrum punctulatum (Green alga), this protein is Large ribosomal subunit protein bL36c.